Here is a 186-residue protein sequence, read N- to C-terminus: Glutathione-independent glyoxalase DJR-1.2 (186 aa).

Residues E20, C105, and H124 contribute to the active site.

It belongs to the peptidase C56 family. DJ-1 subfamily. As to expression, expressed in various tissues, including pharyngeal muscles, pharynx-intestinal valve, ventral nerve cord, spermatheca, rectal gland, inner labial (IL) cells of head neurons, phasmid (PHA/PHB) neurons in tail and supporting sheath/socket cells, as well as in head mesodermal cells (HMC), excretory canals and coelomocytes.

The protein resides in the cytoplasm. The catalysed reaction is methylglyoxal + H2O = (R)-lactate + H(+). Its function is as follows. Catalyzes the conversion of methylglyoxal (MG) or glyoxal (GO) to D-lactate or glycolic acid respectively in a single glutathione (GSH)-independent step. May play a role in detoxifying endogenously produced glyoxals. Involved in protection against glyoxal-induced cell death. Protects dopaminergic neurons from glyoxal-dependent neuronal degeneration. The polypeptide is Glutathione-independent glyoxalase DJR-1.2 (Caenorhabditis elegans).